The primary structure comprises 118 residues: Immunoglobulin heavy variable 3-9 (118 aa).

Residues 1–19 (MELGLSWIFLLAILKGVQC) form the signal peptide. Residues 20-44 (EVQLVESGGGLVQPGRSLRLSCAAS) form a framework-1 region. The region spanning 20 to 118 (EVQLVESGGG…DTALYYCAKD (99 aa)) is the Ig-like domain. Cys-41 and Cys-115 are disulfide-bonded. Positions 45 to 52 (GFTFDDYA) are complementarity-determining-1. The interval 53–69 (MHWVRQAPGKGLEWVSG) is framework-2. The tract at residues 70–77 (ISWNSGSI) is complementarity-determining-2. The tract at residues 78–115 (GYADSVKGRFTISRDNAKNSLYLQMNSLRAEDTALYYC) is framework-3. A complementarity-determining-3 region spans residues 116–118 (AKD).

In terms of assembly, immunoglobulins are composed of two identical heavy chains and two identical light chains; disulfide-linked.

The protein resides in the secreted. It localises to the cell membrane. V region of the variable domain of immunoglobulin heavy chains that participates in the antigen recognition. Immunoglobulins, also known as antibodies, are membrane-bound or secreted glycoproteins produced by B lymphocytes. In the recognition phase of humoral immunity, the membrane-bound immunoglobulins serve as receptors which, upon binding of a specific antigen, trigger the clonal expansion and differentiation of B lymphocytes into immunoglobulins-secreting plasma cells. Secreted immunoglobulins mediate the effector phase of humoral immunity, which results in the elimination of bound antigens. The antigen binding site is formed by the variable domain of one heavy chain, together with that of its associated light chain. Thus, each immunoglobulin has two antigen binding sites with remarkable affinity for a particular antigen. The variable domains are assembled by a process called V-(D)-J rearrangement and can then be subjected to somatic hypermutations which, after exposure to antigen and selection, allow affinity maturation for a particular antigen. This Homo sapiens (Human) protein is Immunoglobulin heavy variable 3-9.